A 385-amino-acid polypeptide reads, in one-letter code: Guanine nucleotide-binding protein alpha-5 subunit (385 aa).

The N-myristoyl glycine moiety is linked to residue Gly-2. Cys-6 carries S-palmitoyl cysteine lipidation. Residues 32-385 enclose the G-alpha domain; it reads RKIKMLLLGI…NKNIETLSLE (354 aa). The segment at 35–48 is G1 motif; that stretch reads KMLLLGISDSGKST. Residues 40–47, 174–180, 199–203, 298–301, and Ala-357 each bind GTP; these read GISDSGKS, IHMRQTT, DVGGQ, and NKID. Mg(2+) contacts are provided by Ser-47 and Thr-180. The segment at 172-180 is G2 motif; sequence DLIHMRQTT. The interval 195-204 is G3 motif; that stretch reads IRLIDVGGQK. The G4 motif stretch occupies residues 294–301; sequence MLFLNKID. The tract at residues 355–360 is G5 motif; that stretch reads TQATIT.

This sequence belongs to the G-alpha family. G proteins are composed of 3 units; alpha, beta and gamma. The alpha chain contains the guanine nucleotide binding site.

Functionally, guanine nucleotide-binding proteins (G proteins) are involved as modulators or transducers in various transmembrane signaling systems. The polypeptide is Guanine nucleotide-binding protein alpha-5 subunit (gpa-5) (Caenorhabditis briggsae).